Consider the following 259-residue polypeptide: Indole-3-glycerol phosphate synthase (259 aa).

It belongs to the TrpC family.

It catalyses the reaction 1-(2-carboxyphenylamino)-1-deoxy-D-ribulose 5-phosphate + H(+) = (1S,2R)-1-C-(indol-3-yl)glycerol 3-phosphate + CO2 + H2O. It functions in the pathway amino-acid biosynthesis; L-tryptophan biosynthesis; L-tryptophan from chorismate: step 4/5. This chain is Indole-3-glycerol phosphate synthase, found in Rhodopirellula baltica (strain DSM 10527 / NCIMB 13988 / SH1).